Consider the following 420-residue polypeptide: UDP-glucuronic acid decarboxylase 1 (420 aa).

The residue at position 1 (Met1) is an N-acetylmethionine. Over 1–19 (MVSKGLLRLVSSVNRRRMK) the chain is Cytoplasmic. Residues 20–40 (LLLGIALFAYAASVWGNFVNM) form a helical; Signal-anchor for type II membrane protein membrane-spanning segment. Residues 41 to 420 (RSIQENGELK…RVKKGRTRHS (380 aa)) are Lumenal-facing. At Thr94 the chain carries Phosphothreonine. NAD(+)-binding residues include Gly98, Phe99, Val100, Asp119, Asn120, Phe122, Thr123, Gly124, Asp144, and Val145. Residues Leu149 and Tyr150 each coordinate UDP-alpha-D-glucuronate. Leu159 and Ser161 together coordinate NAD(+). Lys177 contributes to the UDP-alpha-D-glucuronate binding site. Thr178 is an NAD(+) binding site. The UDP-alpha-D-glucuronate site is built by Asn185, Gly188, Lys191, and Arg192. 3 residues coordinate NAD(+): Ala200, Tyr231, and Lys235. Catalysis depends on Tyr231, which acts as the Proton acceptor. The UDP-alpha-D-glucuronate site is built by Tyr245, Gln248, and Glu249. The NAD(+) site is built by Thr261, His267, and Arg272. Asn316 carries an N-linked (GlcNAc...) asparagine glycan.

This sequence belongs to the NAD(P)-dependent epimerase/dehydratase family. UDP-glucuronic acid decarboxylase subfamily. As to quaternary structure, homodimer and homotetramer. Interacts with AKT1. NAD(+) serves as cofactor.

The protein localises to the golgi apparatus. It is found in the golgi stack membrane. The enzyme catalyses UDP-alpha-D-glucuronate + H(+) = UDP-alpha-D-xylose + CO2. Its pathway is nucleotide-sugar biosynthesis; UDP-alpha-D-xylose biosynthesis; UDP-alpha-D-xylose from UDP-alpha-D-glucuronate: step 1/1. Functionally, catalyzes the NAD-dependent decarboxylation of UDP-glucuronic acid to UDP-xylose. Necessary for the biosynthesis of the core tetrasaccharide in glycosaminoglycan biosynthesis. In Mus musculus (Mouse), this protein is UDP-glucuronic acid decarboxylase 1 (Uxs1).